The primary structure comprises 20 residues: Alkaline phosphatase (20 aa).

The segment at 1–20 is disordered; it reads TDMLAVSVSSTDAIGHKYGT.

Homodimer; may be disulfide-linked. The N-terminus is blocked.

It catalyses the reaction a phosphate monoester + H2O = an alcohol + phosphate. With respect to regulation, completely inhibited by thiol-reducing agents, such as DTT and 2-mercaptoethanol. Activity was also inhibited by sodium orthovanadate, sodium molybdate, N-ethylmaleimide, EDTA and zinc ion, but was not inhibited by okadaic acid. Acts against tyrosine-phosphatases. This Prevotella intermedia protein is Alkaline phosphatase.